The primary structure comprises 141 residues: Galactose-6-phosphate isomerase subunit LacA (141 aa).

The protein belongs to the LacAB/RpiB family. In terms of assembly, heteromultimeric protein consisting of LacA and LacB.

The enzyme catalyses aldehydo-D-galactose 6-phosphate = keto-D-tagatose 6-phosphate. The protein operates within carbohydrate metabolism; D-galactose 6-phosphate degradation; D-tagatose 6-phosphate from D-galactose 6-phosphate: step 1/1. The chain is Galactose-6-phosphate isomerase subunit LacA from Streptococcus pneumoniae serotype 2 (strain D39 / NCTC 7466).